The primary structure comprises 303 residues: Plasmodesmata-located protein 1 (303 aa).

Positions 1 to 21 are cleaved as a signal peptide; sequence MKLTYQFFIFWFFLPFFAISG. Topologically, residues 22 to 268 are extracellular; it reads DDDYKNLIFK…GEKRQHTERT (247 aa). 2 consecutive Gnk2-homologous domains span residues 27 to 136 and 141 to 248; these read NLIF…SSGF and GTEM…YYSH. 6 disulfides stabilise this stretch: cysteine 33-cysteine 108, cysteine 84-cysteine 93, cysteine 96-cysteine 127, cysteine 149-cysteine 226, cysteine 202-cysteine 211, and cysteine 214-cysteine 239. The helical transmembrane segment at 269 to 289 threads the bilayer; that stretch reads IALAVGGVFVLGFVIVCLLVL. Residues 269–289 form a necessary and sufficient for plasmodesmal targeting region; sequence IALAVGGVFVLGFVIVCLLVL. The Cytoplasmic portion of the chain corresponds to 290–303; that stretch reads RSAMKKKSNKYDAY.

This sequence belongs to the cysteine-rich repeat secretory protein family. Plasmodesmata-located proteins (PDLD) subfamily. Interacts with AZI1. Interacts with PDLP5. Does not interact with DIR1. As to quaternary structure, (Microbial infection) Interacts with Grapevine fanleaf virus (GFLV) 2B-MP. Interacts with Cauliflower mosaic virus (CaMV) movement protein. As to expression, highly expressed in cell suspension. Expressed in epidermal and spongy mesophyll cells, and the cell wall interface at the base of the leaf trichome (at protein level). Expressed in haustoria-containing cells.

The protein resides in the cell membrane. The protein localises to the cell junction. Its subcellular location is the plasmodesma. Its function is as follows. Modulates cell-to-cell trafficking. Required for systemic acquired resistance (SAR) which is mediated by the signaling molecules azelaic acid (AzA), glycerol-3-phosphate (G3P), and salicylic acid (SA). Required for the proper localization and stability of AZI1 which is involved in SAR. Mediates callose deposition during downy mildew fungal infection around haustoria. Haustoria are unicellular protrusions from hyphae and function as the site of molecular exchange of nutrients and effectors between host and pathogen. In Arabidopsis thaliana (Mouse-ear cress), this protein is Plasmodesmata-located protein 1.